Reading from the N-terminus, the 156-residue chain is SsrA-binding protein (156 aa).

It belongs to the SmpB family.

It is found in the cytoplasm. In terms of biological role, required for rescue of stalled ribosomes mediated by trans-translation. Binds to transfer-messenger RNA (tmRNA), required for stable association of tmRNA with ribosomes. tmRNA and SmpB together mimic tRNA shape, replacing the anticodon stem-loop with SmpB. tmRNA is encoded by the ssrA gene; the 2 termini fold to resemble tRNA(Ala) and it encodes a 'tag peptide', a short internal open reading frame. During trans-translation Ala-aminoacylated tmRNA acts like a tRNA, entering the A-site of stalled ribosomes, displacing the stalled mRNA. The ribosome then switches to translate the ORF on the tmRNA; the nascent peptide is terminated with the 'tag peptide' encoded by the tmRNA and targeted for degradation. The ribosome is freed to recommence translation, which seems to be the essential function of trans-translation. In Renibacterium salmoninarum (strain ATCC 33209 / DSM 20767 / JCM 11484 / NBRC 15589 / NCIMB 2235), this protein is SsrA-binding protein.